Reading from the N-terminus, the 199-residue chain is Recombination protein RecR (199 aa).

The segment at 59-74 (CLNCGNVGTSDICALC) adopts a C4-type zinc-finger fold. One can recognise a Toprim domain in the interval 82 to 176 (GELCVVEDVA…KLTSLAQGVP (95 aa)).

It belongs to the RecR family.

May play a role in DNA repair. It seems to be involved in an RecBC-independent recombinational process of DNA repair. It may act with RecF and RecO. The polypeptide is Recombination protein RecR (Ruegeria sp. (strain TM1040) (Silicibacter sp.)).